Here is a 259-residue protein sequence, read N- to C-terminus: MSAEAMHAAASAAPKMDPLHHFMVQKVVPIEIAGIDLSITNSTIWMWLAVAVAFLFMKWSFRGRAEDKLIPTKMQSLAEMTFTFVRQIVDQNIGGAEGRKYFPAIFTLFLLVLFCNLLGLIPGSFTPTSQLVVTATLALSVFFFATGLAIVKHGTGFIGFFVPSGVPPMLLILMVPIEIVSYLSRPVSLSVRLFANMTAGHTVLAIMFFFAATLPLGGLLMPAAFATVFTGFELFIGFIQAYIFTILTCVYINDALHLH.

6 helical membrane passes run 37-57 (LSIT…FLFM), 101-121 (YFPA…LGLI), 131-151 (LVVT…LAIV), 157-177 (FIGF…MVPI), 203-223 (VLAI…LMPA), and 232-252 (FELF…CVYI).

The protein belongs to the ATPase A chain family. In terms of assembly, F-type ATPases have 2 components, CF(1) - the catalytic core - and CF(0) - the membrane proton channel. CF(1) has five subunits: alpha(3), beta(3), gamma(1), delta(1), epsilon(1). CF(0) has three main subunits: a(1), b(2) and c(9-12). The alpha and beta chains form an alternating ring which encloses part of the gamma chain. CF(1) is attached to CF(0) by a central stalk formed by the gamma and epsilon chains, while a peripheral stalk is formed by the delta and b chains.

The protein localises to the cell inner membrane. In terms of biological role, key component of the proton channel; it plays a direct role in the translocation of protons across the membrane. The protein is ATP synthase subunit a of Magnetococcus marinus (strain ATCC BAA-1437 / JCM 17883 / MC-1).